Reading from the N-terminus, the 114-residue chain is Transmembrane protein 14C (114 aa).

A run of 4 helical transmembrane segments spans residues Leu-8–Ile-28, Ala-33–Ser-53, Asn-62–Tyr-82, and Phe-87–Ser-107.

The protein localises to the mitochondrion membrane. In terms of biological role, required for normal heme biosynthesis. This is Transmembrane protein 14C (TMEM14C) from Bos taurus (Bovine).